The following is a 368-amino-acid chain: D-amino-acid oxidase (368 aa).

The FAD site is built by Ala-11, Ser-14, Lys-35, His-36, Cys-46, Ser-47, Gly-51, Asn-53, and Phe-174. Cys-230 and Cys-285 are disulfide-bonded. (R)-lactate-binding residues include Tyr-244, Tyr-260, and Arg-308. Tyr-244, Tyr-260, and Arg-308 together coordinate anthranilate. 5 residues coordinate FAD: Arg-308, Gly-334, Gly-337, Tyr-338, and Gln-339. The Microbody targeting signal signature appears at 366–368; sequence ARL.

Belongs to the DAMOX/DASOX family. Homotetramer. Requires FAD as cofactor. The disulfide bond might contribute to the high thermal stability of the protein.

The protein localises to the peroxisome matrix. The enzyme catalyses a D-alpha-amino acid + O2 + H2O = a 2-oxocarboxylate + H2O2 + NH4(+). The catalysed reaction is D-alanine + O2 + H2O = pyruvate + H2O2 + NH4(+). It carries out the reaction D-glutamate + O2 + H2O = H2O2 + 2-oxoglutarate + NH4(+). It catalyses the reaction D-serine + O2 + H2O = 3-hydroxypyruvate + H2O2 + NH4(+). The enzyme catalyses D-phenylalanine + O2 + H2O = 3-phenylpyruvate + H2O2 + NH4(+). The catalysed reaction is D-arginine + O2 + H2O = 5-guanidino-2-oxopentanoate + H2O2 + NH4(+). It carries out the reaction D-methionine + O2 + H2O = 4-methylsulfanyl-2-oxobutanoate + H2O2 + NH4(+). It catalyses the reaction D-leucine + O2 + H2O = 4-methyl-2-oxopentanoate + H2O2 + NH4(+). The enzyme catalyses D-lysine + O2 + H2O = 6-amino-2-oxohexanoate + H2O2 + NH4(+). The catalysed reaction is D-valine + O2 + H2O = 3-methyl-2-oxobutanoate + H2O2 + NH4(+). It carries out the reaction D-histidine + O2 + H2O = 3-(imidazol-5-yl)pyruvate + H2O2 + NH4(+). It catalyses the reaction D-glutamine + O2 + H2O = 2-oxoglutaramate + H2O2 + NH4(+). The enzyme catalyses D-isoleucine + O2 + H2O = (R)-3-methyl-2-oxopentanoate + H2O2 + NH4(+). The catalysed reaction is D-allo-isoleucine + O2 + H2O = (S)-3-methyl-2-oxopentanoate + H2O2 + NH4(+). It carries out the reaction D-threonine + O2 + H2O = (S)-3-hydroxy-2-oxobutanoate + H2O2 + NH4(+). It catalyses the reaction D-asparagine + O2 + H2O = 2-oxosuccinamate + H2O2 + NH4(+). The enzyme catalyses D-tryptophan + O2 + H2O = indole-3-pyruvate + H2O2 + NH4(+). The catalysed reaction is D-tyrosine + O2 + H2O = 3-(4-hydroxyphenyl)pyruvate + H2O2 + NH4(+). Its activity is regulated as follows. Partially inhibited by benzoate, crotonate, and D-malate. Catalyzes the oxidative deamination of D-amino acids with broad substrate specificity. Enables the organism to utilize D-amino acids as a source of nutrients. Unusually, has high activity on D-glutamate. The sequence is that of D-amino-acid oxidase from Talaromyces emersonii (Thermophilic fungus).